Reading from the N-terminus, the 206-residue chain is Ribosome maturation factor RimM (206 aa).

The PRC barrel domain occupies 113 to 206; the sequence is DDEYYWVDLI…RIDSNWPTEL (94 aa).

The protein belongs to the RimM family. As to quaternary structure, binds ribosomal protein uS19.

It is found in the cytoplasm. In terms of biological role, an accessory protein needed during the final step in the assembly of 30S ribosomal subunit, possibly for assembly of the head region. Essential for efficient processing of 16S rRNA. May be needed both before and after RbfA during the maturation of 16S rRNA. It has affinity for free ribosomal 30S subunits but not for 70S ribosomes. The chain is Ribosome maturation factor RimM from Bordetella petrii (strain ATCC BAA-461 / DSM 12804 / CCUG 43448).